Here is a 284-residue protein sequence, read N- to C-terminus: MLFKSLFVAAATAVGVSGHVAREAPRTFGCGTHEPSAEHVGMSKVLAAQEARVLESGNLTARATINVNVYFHVVAASQTVANGYLTDKMVTDQIAVLNRDFAPHDVAFRLAGTDRTVNTGWARDSNEIAMKRALRKGTYKDLNLYTQVSLTDNALGYAYFPTSGATSGSTTFIRDGVSIKAQTVPGGSQAGFNLGKTGTHEVGHWLGLYHTFQGGCTGSGDQVSDTPAQASFSSGCPIGRDSCPGQAGLDPIHNYMDYSDDSCYEEFTPGQDARIHSFWTTYRA.

The signal sequence occupies residues 1-18; sequence MLFKSLFVAAATAVGVSG. N58 carries an N-linked (GlcNAc...) asparagine glycan. Residue H200 participates in Zn(2+) binding. The active site involves E201. H204 contacts Zn(2+). A disulfide bridge connects residues C236 and C263.

This sequence belongs to the peptidase M43B family.

The protein resides in the secreted. In terms of biological role, secreted metalloproteinase that allows assimilation of proteinaceous substrates. This is Extracellular metalloprotease VDBG_01143 from Verticillium alfalfae (strain VaMs.102 / ATCC MYA-4576 / FGSC 10136) (Verticillium wilt of alfalfa).